Consider the following 129-residue polypeptide: Fluoride-specific ion channel FluC (129 aa).

4 helical membrane-spanning segments follow: residues 5 to 25 (LTIA…SGWV), 32 to 52 (AFPF…GLIM), 60 to 80 (LIPA…LTTF), and 99 to 119 (AMVN…LGVI). Gly75 and Thr78 together coordinate Na(+).

It belongs to the fluoride channel Fluc/FEX (TC 1.A.43) family.

Its subcellular location is the cell inner membrane. The enzyme catalyses fluoride(in) = fluoride(out). Its activity is regulated as follows. Na(+) is not transported, but it plays an essential structural role and its presence is essential for fluoride channel function. Its function is as follows. Fluoride-specific ion channel. Important for reducing fluoride concentration in the cell, thus reducing its toxicity. This is Fluoride-specific ion channel FluC from Pelobacter propionicus (strain DSM 2379 / NBRC 103807 / OttBd1).